Reading from the N-terminus, the 316-residue chain is Porphobilinogen deaminase (316 aa).

S-(dipyrrolylmethanemethyl)cysteine is present on Cys-245.

Belongs to the HMBS family. As to quaternary structure, monomer. It depends on dipyrromethane as a cofactor.

It catalyses the reaction 4 porphobilinogen + H2O = hydroxymethylbilane + 4 NH4(+). It functions in the pathway porphyrin-containing compound metabolism; protoporphyrin-IX biosynthesis; coproporphyrinogen-III from 5-aminolevulinate: step 2/4. It participates in porphyrin-containing compound metabolism; chlorophyll biosynthesis. Its function is as follows. Tetrapolymerization of the monopyrrole PBG into the hydroxymethylbilane pre-uroporphyrinogen in several discrete steps. The polypeptide is Porphobilinogen deaminase (Synechococcus sp. (strain CC9311)).